A 549-amino-acid polypeptide reads, in one-letter code: Glucose-6-phosphate isomerase (549 aa).

Glu355 (proton donor) is an active-site residue. Residues His387 and Lys515 contribute to the active site.

This sequence belongs to the GPI family.

It is found in the cytoplasm. The catalysed reaction is alpha-D-glucose 6-phosphate = beta-D-fructose 6-phosphate. The protein operates within carbohydrate biosynthesis; gluconeogenesis. It participates in carbohydrate degradation; glycolysis; D-glyceraldehyde 3-phosphate and glycerone phosphate from D-glucose: step 2/4. Functionally, catalyzes the reversible isomerization of glucose-6-phosphate to fructose-6-phosphate. This is Glucose-6-phosphate isomerase from Haemophilus influenzae (strain PittEE).